A 376-amino-acid polypeptide reads, in one-letter code: Chaperone protein DnaJ (376 aa).

One can recognise a J domain in the interval 5-70; sequence DYYEILGVSK…QKRAAYDQYG (66 aa). The CR-type zinc finger occupies 131-209; that stretch reads GVTKEIRIPT…CHGHGRVERS (79 aa). Zn(2+) contacts are provided by C144, C147, C161, C164, C183, C186, C197, and C200. 4 CXXCXGXG motif repeats span residues 144-151, 161-168, 183-190, and 197-204; these read CDVCHGSG, CPTCHGSG, CPHCQGRG, and CNKCHGHG.

The protein belongs to the DnaJ family. As to quaternary structure, homodimer. Requires Zn(2+) as cofactor.

The protein localises to the cytoplasm. Its function is as follows. Participates actively in the response to hyperosmotic and heat shock by preventing the aggregation of stress-denatured proteins and by disaggregating proteins, also in an autonomous, DnaK-independent fashion. Unfolded proteins bind initially to DnaJ; upon interaction with the DnaJ-bound protein, DnaK hydrolyzes its bound ATP, resulting in the formation of a stable complex. GrpE releases ADP from DnaK; ATP binding to DnaK triggers the release of the substrate protein, thus completing the reaction cycle. Several rounds of ATP-dependent interactions between DnaJ, DnaK and GrpE are required for fully efficient folding. Also involved, together with DnaK and GrpE, in the DNA replication of plasmids through activation of initiation proteins. The sequence is that of Chaperone protein DnaJ from Shigella flexneri serotype 5b (strain 8401).